Consider the following 68-residue polypeptide: Peptide Hp1090 (68 aa).

Residues 1 to 23 (MKTQFAIFLITLVLFQMFSQSDA) form the signal peptide. At Phe-36 the chain carries Phenylalanine amide. Residues 40-68 (GLSDLDDLDESFDGEVSQADIDFLKELMQ) constitute a propeptide that is removed on maturation.

The protein belongs to the non-disulfide-bridged peptide (NDBP) superfamily. Short antimicrobial peptide (group 4) family. Expressed by the venom gland.

It localises to the secreted. The protein localises to the target cell membrane. In terms of biological role, amphipathic peptide which inhibits the growth of Gram-positive bacteria. This is Peptide Hp1090 from Heterometrus petersii (Asian forest scorpion).